We begin with the raw amino-acid sequence, 592 residues long: Protein kinase C zeta type (592 aa).

The 84-residue stretch at 15–98 (RVRLKAHYGG…EVLIIHVFPS (84 aa)) folds into the PB1 domain. Residues 79–145 (AFRLVCQGRD…KRFNRGAYCG (67 aa)) form an interaction with SQSTM1 region. A Phorbol-ester/DAG-type zinc finger spans residues 130–180 (GHLFQAKRFNRGAYCGQCSERIWGLSRQGYRCINCKLLVHKRCHVLVPLTC). The Protein kinase domain occupies 252-518 (FDLIRVIGRG…FSDIKSHAFF (267 aa)). Residues 258–266 (IGRGSYAKV) and Lys281 each bind ATP. Asp376 (proton acceptor) is an active-site residue. Thr410 carries the post-translational modification Phosphothreonine; by PDPK1 and PI3K. Residues 519–590 (RSIDWDLLEK…INPLLLSAEE (72 aa)) enclose the AGC-kinase C-terminal domain. At Thr560 the chain carries Phosphothreonine. Residue Ser591 is modified to Phosphoserine.

It belongs to the protein kinase superfamily. AGC Ser/Thr protein kinase family. PKC subfamily. As to quaternary structure, interacts directly with SQSTM1. Forms a ternary complex with SQSTM1 and KCNAB2. Forms another ternary complex with SQSTM1 and GABRR3. Forms a complex with SQSTM1 and MAP2K5. Interacts with PARD6A, PARD6B and PARD6G. Part of a complex with PARD3, PARD6A or PARD6B or PARD6G and CDC42 or RAC1. Interacts with ADAP1/CENTA1. Interacts (via the protein kinase domain) with WWC1. Forms a tripartite complex with WWC1 and DDR1, but predominantly in the absence of collagen. Interacts with PDPK1 (via N-terminal region). Interacts with WDFY2 (via WD repeats 1-3). Interacts with VAMP2. Forms a complex with WDFY2 and VAMP2. Interacts with APPL1. Interacts with WWC1, WWC2 and WWC3. In terms of processing, CDH5 is required for its phosphorylation at Thr-410. Phosphorylated by protein kinase PDPK1; phosphorylation is inhibited by the apoptotic C-terminal cleavage product of PKN2. Phosphorylation at Thr-410 by PI3K activates the kinase. In terms of tissue distribution, isoform 1: In brain, highly expressed in cerebellar granule neurons and cerebellar astrocytes (at protein level). Expressed at low levels in testes, lung and kidney. Isoform 2: Specifically expressed in brain where it localizes to cerebellar granule neurons (at protein level).

The protein resides in the cytoplasm. It is found in the endosome. Its subcellular location is the cell junction. It localises to the membrane. It carries out the reaction L-seryl-[protein] + ATP = O-phospho-L-seryl-[protein] + ADP + H(+). The enzyme catalyses L-threonyl-[protein] + ATP = O-phospho-L-threonyl-[protein] + ADP + H(+). With respect to regulation, atypical PKCs (PRKCI and PRKCZ) exhibit an elevated basal enzymatic activity (that may be due to the interaction with SMG1 or SQSTM1) and are not regulated by diacylglycerol, phosphatidylserine, phorbol esters or calcium ions. Two specific sites, Thr-410 (activation loop of the kinase domain) and Thr-560 (turn motif), need to be phosphorylated for its full activation. Phosphatidylinositol 3,4,5-trisphosphate might be a physiological activator. Isoform 2: Constitutively active. In terms of biological role, calcium- and diacylglycerol-independent serine/threonine-protein kinase that functions in phosphatidylinositol 3-kinase (PI3K) pathway and mitogen-activated protein (MAP) kinase cascade, and is involved in NF-kappa-B activation, mitogenic signaling, cell proliferation, cell polarity, inflammatory response and maintenance of long-term potentiation (LTP). Upon lipopolysaccharide (LPS) treatment in macrophages, or following mitogenic stimuli, functions downstream of PI3K to activate MAP2K1/MEK1-MAPK1/ERK2 signaling cascade independently of RAF1 activation. Required for insulin-dependent activation of AKT3, but may function as an adapter rather than a direct activator. Upon insulin treatment may act as a downstream effector of PI3K and contribute to the activation of translocation of the glucose transporter SLC2A4/GLUT4 and subsequent glucose transport in adipocytes. In EGF-induced cells, binds and activates MAP2K5/MEK5-MAPK7/ERK5 independently of its kinase activity and can activate JUN promoter through MEF2C. Through binding with SQSTM1/p62, functions in interleukin-1 signaling and activation of NF-kappa-B with the specific adapters RIPK1 and TRAF6. Participates in TNF-dependent transactivation of NF-kappa-B by phosphorylating and activating IKBKB kinase, which in turn leads to the degradation of NF-kappa-B inhibitors. In migrating astrocytes, forms a cytoplasmic complex with PARD6A and is recruited by CDC42 to function in the establishment of cell polarity along with the microtubule motor and dynein. In association with FEZ1, stimulates neuronal differentiation in PC12 cells. In the inflammatory response, is required for the T-helper 2 (Th2) differentiation process, including interleukin production, efficient activation of JAK1 and the subsequent phosphorylation and nuclear translocation of STAT6. May be involved in development of allergic airway inflammation (asthma), a process dependent on Th2 immune response. In the NF-kappa-B-mediated inflammatory response, can relieve SETD6-dependent repression of NF-kappa-B target genes by phosphorylating the RELA subunit at 'Ser-311'. Phosphorylates VAMP2 in vitro. Phosphorylates and activates LRRK1, which phosphorylates RAB proteins involved in intracellular trafficking. Functionally, involved in late synaptic long term potentiation phase in CA1 hippocampal cells and long term memory maintenance. This is Protein kinase C zeta type (Prkcz) from Mus musculus (Mouse).